The chain runs to 615 residues: Sodium-dependent neutral amino acid transporter B(0)AT3 (615 aa).

The Cytoplasmic segment spans residues 1-26; sequence MAQASGMDPLVDIEDERPKWDNKLQY. A helical membrane pass occupies residues 27–47; that stretch reads LLSCIGFAVGLGNIWRFPYLC. Residues 48-52 lie on the Extracellular side of the membrane; sequence QTHGG. Residues 53–73 form a helical membrane-spanning segment; it reads GAFLIPYFIALVFEGIPLFYI. Topologically, residues 74–105 are cytoplasmic; that stretch reads ELAIGQRLRRGSIGVWKTISPYLGGVGLGCFS. A helical membrane pass occupies residues 106-126; the sequence is VSFLVSLYYNTVLLWVLWFFL. Residues 127-177 lie on the Extracellular side of the membrane; the sequence is NSFQHPLPWSTCPLDLNRTGFVQECQSSGTVSYFWYRQTLNITSDISNTGT. N-linked (GlcNAc...) asparagine glycosylation is found at N143 and N167. The helical transmembrane segment at 178-198 threads the bilayer; sequence IQWKLFLCLVACWSTVYLCVI. Residues 199 to 206 lie on the Cytoplasmic side of the membrane; the sequence is RGIESTGK. The chain crosses the membrane as a helical span at residues 207 to 227; the sequence is VIYFTALFPYLVLTIFLIRGL. The Extracellular segment spans residues 228 to 255; the sequence is TLPGATEGLIYLFTPNMKTLQNPRVWLD. Residues 256 to 276 form a helical membrane-spanning segment; sequence AATQIFFSLSLAFGGHIAFAS. Residues 277 to 288 lie on the Cytoplasmic side of the membrane; it reads YNPPRNNCEKDA. The helical transmembrane segment at 289–309 threads the bilayer; the sequence is VIIALVNSMTSLYASIAIFSV. Topologically, residues 310–397 are extracellular; the sequence is MGFKASNDYG…FTEAVLHMPG (88 aa). A glycan (N-linked (GlcNAc...) asparagine) is linked at N353. A helical membrane pass occupies residues 398 to 418; sequence ASVWSVLFFGMLFTLGLSSMF. The Cytoplasmic segment spans residues 419-441; the sequence is GNMEGVITPLLDMGILPKGIPKE. The chain crosses the membrane as a helical span at residues 442-462; sequence VMTGVICFACFLSAICFTLQS. At 463–472 the chain is on the extracellular side; that stretch reads GGYWLEIFDS. A helical transmembrane segment spans residues 473–493; the sequence is FAASLNLIIFAFMEVVGVIHI. The Cytoplasmic portion of the chain corresponds to 494-520; it reads YGMKRFCDDIEWMTGRRPGLYWQVTWR. The helical transmembrane segment at 521-541 threads the bilayer; the sequence is VVSPMLLFGIFLSYIVLLIQT. The Extracellular portion of the chain corresponds to 542–570; the sequence is PPSYKAWNPQYEHFPSREEKFYPGWVQVT. Residues 571–591 form a helical membrane-spanning segment; sequence CVLLSFLPSLWVPGVALAQLL. Residues 592–615 are Cytoplasmic-facing; sequence SQYKQRWKATHLESGLKLQESRGC.

This sequence belongs to the sodium:neurotransmitter symporter (SNF) (TC 2.A.22) family. SLC6A18 subfamily. Interacts with CLTRN; this interaction regulates the trafficking of SLC6A18 to the cell membrane and its activity. As to expression, expressed predominantly in kidney.

It is found in the apical cell membrane. The protein resides in the cell membrane. The enzyme catalyses L-alanine(out) + chloride(out) + 2 Na(+)(out) = L-alanine(in) + chloride(in) + 2 Na(+)(in). It carries out the reaction glycine(out) + chloride(out) + 2 Na(+)(out) = glycine(in) + chloride(in) + 2 Na(+)(in). The catalysed reaction is L-methionine(out) + chloride(out) + 2 Na(+)(out) = L-methionine(in) + chloride(in) + 2 Na(+)(in). It catalyses the reaction L-valine(out) + chloride(out) + 2 Na(+)(out) = L-valine(in) + chloride(in) + 2 Na(+)(in). The enzyme catalyses L-isoleucine(out) + chloride(out) + 2 Na(+)(out) = L-isoleucine(in) + chloride(in) + 2 Na(+)(in). It carries out the reaction L-serine(out) + chloride(out) + 2 Na(+)(out) = L-serine(in) + chloride(in) + 2 Na(+)(in). The catalysed reaction is L-leucine(out) + chloride(out) + 2 Na(+)(out) = L-leucine(in) + chloride(in) + 2 Na(+)(in). In terms of biological role, symporter that transports one amino acid molecule together with two sodium and one chloride ions in kidneys and plays a role in the neutral amino acids reabsorption. Preferentially transports neutral amino acids such as L-glycine and L-alanine but also other neutral amino acids. Required CLTRN for cell surface expression and for its amino acid transporter activity. The transport mechanism is pH-independent. This chain is Sodium-dependent neutral amino acid transporter B(0)AT3, found in Mus musculus (Mouse).